The following is a 307-amino-acid chain: MSMILSASVIRVRDGLPLSASTDYEQSTGMQECRKYFKMLSRKLAQLPDRCTLKTGHYNINFISSLGVSYMMLCTDNYPNVLAFSFLDELQKEFITTYNMMKTNTAVRPYCFIEFDNFIQRTKQRYNNPRSLSTKINLSDMQTEIKLRPPYQISMCELGSANGVTSAFSVDCKGAGKISSAHQRLEPATLSGIVGFILSLLCGALNLIRGFHAIESLLQSDGDDFNYIIAFFLGTAACLYQCYLLVYYTGWRNVKSFLTFGLICLCNMYLYELRNLWQLFFHVTVGAFVTLQIWLRQAQGKAPDYDV.

Serine 2 carries the N-acetylserine modification. Over 2–187 (SMILSASVIR…ISSAHQRLEP (186 aa)) the chain is Cytoplasmic. Serine 6 and serine 8 each carry phosphoserine. Residues 8–119 (SVIRVRDGLP…YCFIEFDNFI (112 aa)) form the Longin domain. A helical membrane pass occupies residues 188–208 (ATLSGIVGFILSLLCGALNLI). The Lumenal portion of the chain corresponds to 209–226 (RGFHAIESLLQSDGDDFN). A helical transmembrane segment spans residues 227 to 247 (YIIAFFLGTAACLYQCYLLVY). Over 248–253 (YTGWRN) the chain is Cytoplasmic. Residues 254 to 271 (VKSFLTFGLICLCNMYLY) traverse the membrane as a helical segment. Topologically, residues 272 to 274 (ELR) are lumenal. A helical membrane pass occupies residues 275 to 295 (NLWQLFFHVTVGAFVTLQIWL). Topologically, residues 296-307 (RQAQGKAPDYDV) are cytoplasmic.

The protein belongs to the synaptobrevin family.

The protein localises to the endoplasmic reticulum membrane. In terms of biological role, may be involved in vesicle transport between the ER and the Golgi complex. The chain is Vesicle-trafficking protein SEC22a (SEC22A) from Macaca fascicularis (Crab-eating macaque).